The primary structure comprises 412 residues: Peptidase T (412 aa).

Position 78 (H78) interacts with Zn(2+). The active site involves D80. D140 is a binding site for Zn(2+). The active-site Proton acceptor is the E174. E175, D197, and H379 together coordinate Zn(2+).

Belongs to the peptidase M20B family. The cofactor is Zn(2+).

It localises to the cytoplasm. The catalysed reaction is Release of the N-terminal residue from a tripeptide.. Its function is as follows. Cleaves the N-terminal amino acid of tripeptides. The polypeptide is Peptidase T (Staphylococcus epidermidis (strain ATCC 12228 / FDA PCI 1200)).